The sequence spans 1158 residues: Type IV pilus biogenesis factor PilY1 (1158 aa).

Residues 1–29 (MIHQITRAGKSLLAAGCTLSILFASDSYA) form the signal peptide. Ca(2+) is bound by residues Asp-841, Asn-843, Asp-845, Ile-847, and Asp-849.

This sequence belongs to the PilY1 family.

The protein resides in the fimbrium. It is found in the membrane. The protein localises to the cytoplasm. Its subcellular location is the cytosol. In terms of biological role, involved in pilus assembly, twitching motility and adhesion to host cells. Primes type IV pili (T4P) assembly and is required for inclusion of minor pilins PilV, PilW and PilX to the surface pili. Stabilizes assembled pilus fibers likely by antagonizing retraction mediated by PilT. Calcium-binding and calcium release by PilY1 seem to be essential for twitching motility and for regulation of pilus retraction dynamics of PilT. Regulates surface-activated virulence possibly by acting as a surface-attachment mechanosensor. This chain is Type IV pilus biogenesis factor PilY1, found in Pseudomonas aeruginosa (strain UCBPP-PA14).